Reading from the N-terminus, the 432-residue chain is Eukaryotic translation initiation factor 3 subunit M (432 aa).

The PCI domain maps to 184 to 356 (EEEEAYQHIL…KVFLIHSVRY (173 aa)). Basic and acidic residues-rich tracts occupy residues 392-401 (AQQEAERKLV) and 423-432 (QHRERNDNDD). The disordered stretch occupies residues 392-432 (AQQEAERKLVEASTQHNNDRGNQRRGGNRGQQHRERNDNDD).

This sequence belongs to the eIF-3 subunit M family. In terms of assembly, component of the eukaryotic translation initiation factor 3 (eIF-3) complex.

It localises to the cytoplasm. In terms of biological role, component of the eukaryotic translation initiation factor 3 (eIF-3) complex, which is involved in protein synthesis of a specialized repertoire of mRNAs and, together with other initiation factors, stimulates binding of mRNA and methionyl-tRNAi to the 40S ribosome. The eIF-3 complex specifically targets and initiates translation of a subset of mRNAs involved in cell proliferation. The sequence is that of Eukaryotic translation initiation factor 3 subunit M from Pyricularia oryzae (strain 70-15 / ATCC MYA-4617 / FGSC 8958) (Rice blast fungus).